The sequence spans 1179 residues: Integrin alpha-1 (1179 aa).

A signal peptide spans 1–28 (MAPRPRARPGVAVACCWLLTVVLRCCVS). Over 29–1141 (FNVDVKNSMT…SKDGLPGRVP (1113 aa)) the chain is Extracellular. One copy of the FG-GAP 1 repeat lies at 30-91 (NVDVKNSMTF…CPVGRGESLP (62 aa)). The N-linked (GlcNAc...) asparagine glycan is linked to asparagine 74. The cysteines at positions 82 and 92 are disulfide-linked. N-linked (GlcNAc...) asparagine glycosylation is found at asparagine 100, asparagine 105, asparagine 112, asparagine 217, asparagine 317, asparagine 341, asparagine 402, asparagine 418, and asparagine 460. One copy of the FG-GAP 2 repeat lies at 101-160 (TSIPNVTEVKENMTFGSTLVTNPNGGFLACGPLYAYRCGHLHYTTGICSDVSPTFQVVNS). The VWFA domain maps to 161 to 360 (IAPVQECSTQ…IVKTLGERIF (200 aa)). One copy of the FG-GAP 3 repeat lies at 365–417 (TADQSAASFEMEMSQTGFSAHYSQDWVMLGAVGAYDWNGTVVMQKASQIIIPR). FG-GAP repeat units follow at residues 422 to 475 (NVES…DGNI), 476 to 538 (KILQ…RFEY), 557 to 615 (SCTT…TIRK), and 619 to 679 (QRIP…FEPN). Aspartate 498, aspartate 500, aspartate 502, and aspartate 506 together coordinate Ca(2+). N-linked (GlcNAc...) asparagine glycosylation is present at asparagine 532. Residues aspartate 580, asparagine 582, aspartate 584, aspartate 588, aspartate 642, asparagine 644, aspartate 646, and aspartate 650 each contribute to the Ca(2+) site. An intrachain disulfide couples cysteine 688 to cysteine 697. N-linked (GlcNAc...) asparagine glycans are attached at residues asparagine 699, asparagine 748, and asparagine 780. Residues cysteine 703 and cysteine 756 are joined by a disulfide bond. A disulfide bond links cysteine 808 and cysteine 814. N-linked (GlcNAc...) asparagine glycosylation is found at asparagine 840, asparagine 883, asparagine 908, asparagine 915, asparagine 939, asparagine 966, asparagine 974, and asparagine 1008. Cysteine 878 and cysteine 886 are disulfide-bonded. 2 disulfides stabilise this stretch: cysteine 1030-cysteine 1062 and cysteine 1065-cysteine 1072. 4 N-linked (GlcNAc...) asparagine glycosylation sites follow: asparagine 1073, asparagine 1083, asparagine 1102, and asparagine 1113. Residues 1142 to 1164 (LWVILLSAFAGLLLLMLLILALW) form a helical membrane-spanning segment. Residues 1165-1179 (KIGFFKRPLKKKMEK) are Cytoplasmic-facing. Residues 1167 to 1171 (GFFKR) carry the GFFKR motif motif.

It belongs to the integrin alpha chain family. In terms of assembly, heterodimer of an alpha and a beta subunit. Alpha-1 associates with beta-1. Interacts with RAB21. Interacts (via cytoplasmic domain) with PTPN2; activates PTPN2 phosphatase activity towards EGFR and negatively regulates EGF signaling.

It is found in the membrane. In terms of biological role, integrin alpha-1/beta-1 is a receptor for laminin and collagen. It recognizes the proline-hydroxylated sequence G-F-P-G-E-R in collagen. Involved in anchorage-dependent, negative regulation of EGF-stimulated cell growth. This Homo sapiens (Human) protein is Integrin alpha-1 (ITGA1).